Consider the following 575-residue polypeptide: Transcription factor COE2 (575 aa).

Positions 62–65 (RKSN) are interaction with DNA. Residues 150 to 169 (CRVLLTHEVMCSRCCEKKSC) form a C5-type zinc finger. Interaction with DNA regions lie at residues 196-203 (NCLKTAGN) and 235-238 (NNSK). Residues 253 to 336 (PCIKAISPSE…KGAPGRFIYT (84 aa)) form the IPT/TIG domain. The span at 441–453 (STQGNNQGYIRNT) shows a compositional bias: polar residues. The tract at residues 441–479 (STQGNNQGYIRNTSSISPRGYSSSSTPQQSNYSTSSNSM) is disordered. A compositionally biased stretch (low complexity) spans 454 to 479 (SSISPRGYSSSSTPQQSNYSTSSNSM).

Belongs to the COE family. In terms of assembly, forms either a homodimer or a heterodimer with a related family member. Interacts with SIX1.

The protein resides in the nucleus. Its function is as follows. Transcription factor that, in osteoblasts, activates the decoy receptor for RANKL, TNFRSF11B, which in turn regulates osteoclast differentiation. Acts in synergy with the Wnt-responsive LEF1/CTNNB1 pathway. Recognizes variations of the palindromic sequence 5'-ATTCCCNNGGGAATT-3'. The chain is Transcription factor COE2 (EBF2) from Homo sapiens (Human).